The chain runs to 262 residues: uncharacterized protein (262 aa).

A Radical SAM core domain is found at 1–211 (MAFHVMIIPS…LLYLLDSYLE (211 aa)). [4Fe-4S] cluster contacts are provided by Cys-13, Cys-17, and Cys-20.

Belongs to the radical SAM superfamily. Anaerobic sulfatase-maturating enzyme family. Requires [4Fe-4S] cluster as cofactor.

This is an uncharacterized protein from Methanothermobacter thermautotrophicus (strain ATCC 29096 / DSM 1053 / JCM 10044 / NBRC 100330 / Delta H) (Methanobacterium thermoautotrophicum).